A 120-amino-acid polypeptide reads, in one-letter code: Large ribosomal subunit protein uL18 (120 aa).

Belongs to the universal ribosomal protein uL18 family. In terms of assembly, part of the 50S ribosomal subunit; part of the 5S rRNA/L5/L18/L25 subcomplex. Contacts the 5S and 23S rRNAs.

In terms of biological role, this is one of the proteins that bind and probably mediate the attachment of the 5S RNA into the large ribosomal subunit, where it forms part of the central protuberance. The polypeptide is Large ribosomal subunit protein uL18 (Brevibacillus brevis (strain 47 / JCM 6285 / NBRC 100599)).